We begin with the raw amino-acid sequence, 98 residues long: NADH-ubiquinone oxidoreductase chain 4L (98 aa).

Transmembrane regions (helical) follow at residues 1 to 21, 25 to 45, and 67 to 87; these read MSLV…GLLM, HLMS…ILST, and AACE…TYGV.

Belongs to the complex I subunit 4L family. As to quaternary structure, core subunit of respiratory chain NADH dehydrogenase (Complex I) which is composed of 45 different subunits.

The protein resides in the mitochondrion inner membrane. The catalysed reaction is a ubiquinone + NADH + 5 H(+)(in) = a ubiquinol + NAD(+) + 4 H(+)(out). Functionally, core subunit of the mitochondrial membrane respiratory chain NADH dehydrogenase (Complex I) which catalyzes electron transfer from NADH through the respiratory chain, using ubiquinone as an electron acceptor. Part of the enzyme membrane arm which is embedded in the lipid bilayer and involved in proton translocation. This is NADH-ubiquinone oxidoreductase chain 4L (MT-ND4L) from Talpa europaea (European mole).